The chain runs to 67 residues: Large ribosomal subunit protein uL29 (67 aa).

Belongs to the universal ribosomal protein uL29 family.

This chain is Large ribosomal subunit protein uL29, found in Gemmatimonas aurantiaca (strain DSM 14586 / JCM 11422 / NBRC 100505 / T-27).